Reading from the N-terminus, the 618-residue chain is Cationic amino acid transporter 3 (618 aa).

The Cytoplasmic portion of the chain corresponds to 1-36 (MLWQALRRFGQKLVRRRVLELGMGETRLARCLSTLD). A helical transmembrane segment spans residues 37 to 57 (LVALGVGSTLGAGVYVLAGEV). Residues 58–61 (AKDK) are Extracellular-facing. A helical membrane pass occupies residues 62 to 82 (AGPSIVICFLVAALSSVLAGL). Residues 83 to 107 (CYAEFGARVPGSGSAYLYSYVTVGE) lie on the Cytoplasmic side of the membrane. The helical transmembrane segment at 108-128 (LWAFTTGWNLILSYVIGTASV) threads the bilayer. Topologically, residues 129–162 (ARAWSSAFDNLIGNHISRTLKGTILLKMPHVLAE) are extracellular. The helical transmembrane segment at 163 to 183 (YPDFFALALVLLLTGLLVLGA) threads the bilayer. At 184–191 (SKSALVTK) the chain is on the cytoplasmic side. Residues 192–212 (VFTGMNLLVLSFVIISGFIKG) traverse the membrane as a helical segment. At 213–244 (ELRNWKLTKEDYCLTMSESNGTCSLDSMGSGG) the chain is on the extracellular side. Residue N232 is glycosylated (N-linked (GlcNAc...) asparagine). Residues 245 to 265 (FMPFGLEGILRGAATCFYAFV) form a helical membrane-spanning segment. At 266–285 (GFDCIATTGEEAQNPQRSIP) the chain is on the cytoplasmic side. The chain crosses the membrane as a helical span at residues 286-306 (MGIVISMFICFLAYFGVSSAL). Topologically, residues 307–335 (TLMMPYYKLHPESPLPEAFSYVGWEPARY) are extracellular. A helical transmembrane segment spans residues 336 to 356 (LVAIGSLCALSTSLLGSMFPM). Residues 357-380 (PRVMYSMAEDGLLFRVLAKVHSVT) are Cytoplasmic-facing. Residues 381 to 401 (HIPIVATLVSGVIAAFMAFLF) traverse the membrane as a helical segment. Residues 402-406 (ELTDL) lie on the Extracellular side of the membrane. Residues 407 to 427 (VDLMSIGTLLAHSLVSICVLI) form a helical membrane-spanning segment. The Cytoplasmic segment spans residues 428–474 (LRYQPDQEMKSVEEEMELQEETLEAEKLTVQALFCPVNSIPTLLSGR). A helical transmembrane segment spans residues 475–495 (VVYVCSSLLAVLLTVLCLVLT). Residues 496–506 (WWTTPLRSGDP) lie on the Extracellular side of the membrane. Residues 507–527 (VWVTVVVLILGLILAISGVIW) traverse the membrane as a helical segment. Residues 528 to 539 (RQPQNRTPLHFK) lie on the Cytoplasmic side of the membrane. The chain crosses the membrane as a helical span at residues 540-560 (VPAVPLLPLVSIFVNVYLMMQ). The Extracellular portion of the chain corresponds to 561–568 (MTAGTWAR). A helical membrane pass occupies residues 569 to 589 (FGIWMLIGFAIYFGYGIQHSM). The Cytoplasmic portion of the chain corresponds to 590–618 (KEVKNHQTLPKTRAQTIDLDLTTSCVHSI). The residue at position 605 (T605) is a Phosphothreonine. The residue at position 617 (S617) is a Phosphoserine.

The protein belongs to the amino acid-polyamine-organocation (APC) superfamily. Cationic amino acid transporter (CAT) (TC 2.A.3.3) family. In terms of processing, N-glycosylated. Expressed in adult brain and in a wide variety of embryonic tissues.

It is found in the cell membrane. It catalyses the reaction L-arginine(in) = L-arginine(out). The enzyme catalyses L-lysine(in) = L-lysine(out). The catalysed reaction is L-ornithine(in) = L-ornithine(out). In terms of biological role, uniporter that mediates the uptake of cationic L-amino acids such as L-arginine, L-lysine and L-ornithine. The transport is sodium ions- and pH-independent, moderately trans-stimulated and is mediated by passive diffusion. The chain is Cationic amino acid transporter 3 from Mus musculus (Mouse).